A 286-amino-acid polypeptide reads, in one-letter code: UPF0761 membrane protein KPN78578_41360 (286 aa).

Transmembrane regions (helical) follow at residues L44–F64, F74–F94, V104–L124, F140–I160, L183–T203, A210–L230, and V244–L264.

The protein belongs to the UPF0761 family.

It localises to the cell inner membrane. The sequence is that of UPF0761 membrane protein KPN78578_41360 from Klebsiella pneumoniae subsp. pneumoniae (strain ATCC 700721 / MGH 78578).